The sequence spans 125 residues: Small ribosomal subunit protein bS6 (125 aa).

The tract at residues 96 to 125 (ETGASSMMKTVEREEARKASQAEFAAANER) is disordered. The segment covering 105–115 (TVEREEARKAS) has biased composition (basic and acidic residues).

Belongs to the bacterial ribosomal protein bS6 family.

Functionally, binds together with bS18 to 16S ribosomal RNA. The protein is Small ribosomal subunit protein bS6 of Paracidovorax citrulli (strain AAC00-1) (Acidovorax citrulli).